Here is a 198-residue protein sequence, read N- to C-terminus: Cytokinin riboside 5'-monophosphate phosphoribohydrolase (198 aa).

Residues E91, R109–K110, G126–E132, and T138 each bind substrate.

It belongs to the LOG family.

The enzyme catalyses N(6)-(dimethylallyl)adenosine 5'-phosphate + H2O = N(6)-dimethylallyladenine + D-ribose 5-phosphate. It catalyses the reaction 9-ribosyl-trans-zeatin 5'-phosphate + H2O = trans-zeatin + D-ribose 5-phosphate. Its function is as follows. Catalyzes the hydrolytic removal of ribose 5'-monophosphate from nitrogen N6-modified adenosines, the final step of bioactive cytokinin synthesis. The chain is Cytokinin riboside 5'-monophosphate phosphoribohydrolase (fas6) from Rhodococcoides fascians (Rhodococcus fascians).